Consider the following 176-residue polypeptide: ATP synthase subunit b (176 aa).

The chain crosses the membrane as a helical span at residues 26-45; it reads VINLAIIIGVLVYFGRGLLG.

The protein belongs to the ATPase B chain family. F-type ATPases have 2 components, F(1) - the catalytic core - and F(0) - the membrane proton channel. F(1) has five subunits: alpha(3), beta(3), gamma(1), delta(1), epsilon(1). F(0) has four main subunits: a(1), b(1), b'(1) and c(10-14). The alpha and beta chains form an alternating ring which encloses part of the gamma chain. F(1) is attached to F(0) by a central stalk formed by the gamma and epsilon chains, while a peripheral stalk is formed by the delta, b and b' chains.

It localises to the cellular thylakoid membrane. Its function is as follows. F(1)F(0) ATP synthase produces ATP from ADP in the presence of a proton or sodium gradient. F-type ATPases consist of two structural domains, F(1) containing the extramembraneous catalytic core and F(0) containing the membrane proton channel, linked together by a central stalk and a peripheral stalk. During catalysis, ATP synthesis in the catalytic domain of F(1) is coupled via a rotary mechanism of the central stalk subunits to proton translocation. In terms of biological role, component of the F(0) channel, it forms part of the peripheral stalk, linking F(1) to F(0). This is ATP synthase subunit b from Synechococcus sp. (strain PCC 6716).